We begin with the raw amino-acid sequence, 395 residues long: Calreticulin (395 aa).

The signal sequence occupies residues 1–15; the sequence is MKSLCLLAIVAVVSA. The cysteines at positions 101 and 133 are disulfide-linked. 4 residues coordinate an alpha-D-glucoside: Y105, K107, Y124, and D131. 7 tandem repeats follow at residues 186-197, 205-216, 222-233, 239-250, 254-264, 268-278, and 282-292. Residues 186–250 are 4 X approximate repeats; the sequence is AQTGSLEEDW…DAKKPEDWDD (65 aa). Residues 193-301 form a P-domain region; sequence EDWDLLPAKK…PEYTPDDELY (109 aa). The segment covering 202–212 has biased composition (basic and acidic residues); that stretch reads KIKDPDAKKPE. The interval 202 to 255 is disordered; the sequence is KIKDPDAKKPEDWDEREYIDDAEDAKPEDWEKPEHIPDPDAKKPEDWDDEMDGE. Positions 213–224 are enriched in acidic residues; that stretch reads DWDEREYIDDAE. Basic and acidic residues predominate over residues 225–246; sequence DAKPEDWEKPEHIPDPDAKKPE. The segment at 254–292 is 3 X approximate repeats; the sequence is GEWEPPMIDNPEYKGEWKPKQIKNPAYKGKWIHPEIENP. Residues 302 to 395 are C-domain; that stretch reads SYESWGAIGF…KEEEEGHDEL (94 aa). D312 provides a ligand contact to an alpha-D-glucoside. Over residues 340 to 380 the composition is skewed to basic and acidic residues; it reads ETFDKLKTVEKEKKEKADEETRKAEEEARKKAEEEKEAKKD. The disordered stretch occupies residues 340-395; the sequence is ETFDKLKTVEKEKKEKADEETRKAEEEARKKAEEEKEAKKDDDEEEKEEEEGHDEL. The span at 381-395 shows a compositional bias: acidic residues; sequence DDEEEKEEEEGHDEL. A Prevents secretion from ER motif is present at residues 392 to 395; the sequence is HDEL.

The protein belongs to the calreticulin family. Post-translationally, cleaved by caspase ced-3 in vitro.

The protein localises to the endoplasmic reticulum lumen. In terms of biological role, molecular calcium-binding chaperone promoting folding, oligomeric assembly and quality control in the endoplasmic reticulum (ER) via the calreticulin/calnexin cycle. This lectin may interact transiently with almost all of the monoglucosylated glycoproteins that are synthesized in the ER. Probably by controlling the folding of extracellular matrix protein unc-52/Perlecan, may play a role in the formation of fibrous organelles, a hemidesmosome-like structure attaching muscles to the epidermis. Protects dopaminergic neurons against oxidative stress-induced neurodegeneration. May play a role in protection against ER stress. Plays a role in modulating lifespan, acting by influencing ER calcium homeostasis. This Caenorhabditis elegans protein is Calreticulin (crt-1).